The primary structure comprises 578 residues: NADPH oxidase 4 (578 aa).

Residues 1–16 lie on the Cytoplasmic side of the membrane; it reads MAVSWRSWLANEGVKH. A helical transmembrane segment spans residues 17 to 37; that stretch reads LCLFIWLSMNVLLFWKTFLLY. Residues 38 to 62 are Extracellular-facing; the sequence is NQGPEYHYLHQMLGLGLCLSRASAS. Residues 58–303 form the Ferric oxidoreductase domain; it reads RASASVLNLN…YCAERLYRYI (246 aa). Residues 63–83 form a helical membrane-spanning segment; that stretch reads VLNLNCSLILLPMCRTLLAYL. Topologically, residues 84–103 are cytoplasmic; it reads RGSQKVPSRRTRRLLDKSRT. A helical membrane pass occupies residues 104–124; the sequence is FHITCGVTICIFSGVHVAAHL. Residues 125–154 lie on the Extracellular side of the membrane; it reads VNALNFSVNYSEDFVELNAARYRDEDPRKL. A glycan (N-linked (GlcNAc...) asparagine) is linked at Asn133. The helical transmembrane segment at 155–175 threads the bilayer; sequence LFTTVPGLTGVCMVVVLFLMI. Residues 176–188 are Cytoplasmic-facing; it reads TASTYAIRVSNYD. Residues 189–209 traverse the membrane as a helical segment; the sequence is IFWYTHNLFFVFYMLLTLHVS. At 210–424 the chain is on the extracellular side; that stretch reads GGLLKYQTNL…SPFEESLNYE (215 aa). The interval 218–273 is E-loop; essential for H2O2 generating catalytic activity; it reads NLDTHPPGCISLNRTSSQNISLPEYFSEHFHEPFPEGFSKPEEFTQNTFVKICMEE. Asn230 is a glycosylation site (N-linked (GlcNAc...) asparagine). The segment at 248-575 is mediates interaction with TLR4; the sequence is HEPFPEGFSK…YGTRFEYNKE (328 aa). In terms of domain architecture, FAD-binding FR-type spans 304-419; the sequence is RSNKPVTIIS…DGPFGSPFEE (116 aa). The chain crosses the membrane as a helical span at residues 425–445; the sequence is VSLCVAGGIGVTPFASILNTL. The Cytoplasmic segment spans residues 446 to 578; it reads LDDWKPYKLR…RFEYNKESFS (133 aa).

Interacts with, relocalizes and stabilizes CYBA/p22phox. Interacts with TLR4. Interacts with protein disulfide isomerase. Interacts with PPP1R15A. Interacts with LRRC8A; this interaction prevents the ubiquitin-mediated degradation of LRRC8A. Requires heme as cofactor. N-glycosylation is required for the function.

It localises to the cytoplasm. Its subcellular location is the endoplasmic reticulum membrane. It is found in the cell membrane. The protein localises to the cell junction. The protein resides in the focal adhesion. It localises to the nucleus. The enzyme catalyses NADPH + 2 O2 = 2 superoxide + NADP(+) + H(+). It carries out the reaction NADPH + O2 + H(+) = H2O2 + NADP(+). With respect to regulation, activated by insulin. Inhibited by diphenylene iodonium. Inhibited by plumbagin. Activated by phorbol 12-myristate 13-acetate (PMA). NADPH oxidase that catalyzes predominantly the reduction of oxygen to H2O2. Can also catalyze to a smaller extent, the reduction of oxygen to superoxide. May function as an oxygen sensor regulating the KCNK3/TASK-1 potassium channel and HIF1A activity. May regulate insulin signaling cascade. May play a role in apoptosis, bone resorption and lipolysaccharide-mediated activation of NFKB. May produce superoxide in the nucleus and play a role in regulating gene expression upon cell stimulation. Promotes ferroptosis, reactive oxygen species production and reduced glutathione (GSH) levels by activating NLRP3 inflammasome activation and cytokine release. This Pongo abelii (Sumatran orangutan) protein is NADPH oxidase 4 (NOX4).